A 40-amino-acid polypeptide reads, in one-letter code: Dolichyl-diphosphooligosaccharide--protein glycosyltransferase subunit 4 (40 aa).

Topologically, residues 1-4 are lumenal; it reads MISD. A helical transmembrane segment spans residues 5-25; that stretch reads VQLAIFSNVLGVFLFLLVVAY. At 26-40 the chain is on the cytoplasmic side; that stretch reads HYINANTGKPSAKAK.

It belongs to the OST4 family. Component of the oligosaccharyltransferase (OST) complex.

The protein localises to the endoplasmic reticulum membrane. Subunit of the oligosaccharyl transferase (OST) complex that catalyzes the initial transfer of a defined glycan (Glc(3)Man(9)GlcNAc(2) in eukaryotes) from the lipid carrier dolichol-pyrophosphate to an asparagine residue within an Asn-X-Ser/Thr consensus motif in nascent polypeptide chains, the first step in protein N-glycosylation. N-glycosylation occurs cotranslationally and the complex associates with the Sec61 complex at the channel-forming translocon complex that mediates protein translocation across the endoplasmic reticulum (ER). All subunits are required for a maximal enzyme activity. The sequence is that of Dolichyl-diphosphooligosaccharide--protein glycosyltransferase subunit 4 from Drosophila yakuba (Fruit fly).